A 331-amino-acid polypeptide reads, in one-letter code: uncharacterized protein (331 aa).

Pentapeptide repeat domains follow at residues 50-89 (ENLQ…RLGH), 90-129 (CQMN…NFKG), 140-179 (ANLR…NLQE), 185-224 (ANLR…KLTG), and 230-269 (TNLS…NLTQ).

This is an uncharacterized protein from Synechocystis sp. (strain ATCC 27184 / PCC 6803 / Kazusa).